A 205-amino-acid chain; its full sequence is Urease accessory protein UreG 1 (205 aa).

14 to 21 is a GTP binding site; the sequence is GPVGSGKT.

It belongs to the SIMIBI class G3E GTPase family. UreG subfamily. As to quaternary structure, homodimer. UreD, UreF and UreG form a complex that acts as a GTP-hydrolysis-dependent molecular chaperone, activating the urease apoprotein by helping to assemble the nickel containing metallocenter of UreC. The UreE protein probably delivers the nickel.

The protein localises to the cytoplasm. Its function is as follows. Facilitates the functional incorporation of the urease nickel metallocenter. This process requires GTP hydrolysis, probably effectuated by UreG. In Methylobacterium radiotolerans (strain ATCC 27329 / DSM 1819 / JCM 2831 / NBRC 15690 / NCIMB 10815 / 0-1), this protein is Urease accessory protein UreG 1.